Consider the following 349-residue polypeptide: Quinone oxidoreductase-like protein 2 (349 aa).

At Lys-35 the chain carries N6-acetyllysine. Lys-200 bears the N6-succinyllysine mark.

Belongs to the zinc-containing alcohol dehydrogenase family. Quinone oxidoreductase subfamily.

This chain is Quinone oxidoreductase-like protein 2, found in Bos taurus (Bovine).